We begin with the raw amino-acid sequence, 355 residues long: Protein pelota homolog (355 aa).

This sequence belongs to the eukaryotic release factor 1 family. Pelota subfamily. In terms of assembly, monomer. A divalent metal cation is required as a cofactor.

It is found in the cytoplasm. May function in recognizing stalled ribosomes, interact with stem-loop structures in stalled mRNA molecules, and effect endonucleolytic cleavage of the mRNA. May play a role in the release non-functional ribosomes and degradation of damaged mRNAs. Has endoribonuclease activity. This is Protein pelota homolog from Natronomonas pharaonis (strain ATCC 35678 / DSM 2160 / CIP 103997 / JCM 8858 / NBRC 14720 / NCIMB 2260 / Gabara) (Halobacterium pharaonis).